The chain runs to 346 residues: uncharacterized protein (346 aa).

This is an uncharacterized protein from Schizosaccharomyces pombe (strain 972 / ATCC 24843) (Fission yeast).